The sequence spans 478 residues: uncharacterized protein (478 aa).

A signal peptide spans M1 to A19. Topologically, residues S20 to Q214 are lumenal. A helical transmembrane segment spans residues I215 to I235. The Cytoplasmic segment spans residues C236 to K240. Residues L241 to V261 form a helical membrane-spanning segment. Residues K262 to D289 are Lumenal-facing. Residues G290–I310 traverse the membrane as a helical segment. Over R311–M317 the chain is Cytoplasmic. A helical transmembrane segment spans residues V318–V338. Residues Y339–V356 are Lumenal-facing. A helical transmembrane segment spans residues W357 to F377. The Cytoplasmic segment spans residues R378–W391. A helical membrane pass occupies residues N392–F412. Over D413–E427 the chain is Lumenal. Residues Y428–Y448 form a helical membrane-spanning segment. The Cytoplasmic portion of the chain corresponds to S449–F478.

It localises to the endoplasmic reticulum membrane. The protein resides in the golgi apparatus membrane. This is an uncharacterized protein from Schizosaccharomyces pombe (strain 972 / ATCC 24843) (Fission yeast).